Here is a 385-residue protein sequence, read N- to C-terminus: Cyclin-A3-2 (385 aa).

The segment at 1-110 is disordered; sequence MADKENSTPA…STSTASPSSG (110 aa). Composition is skewed to low complexity over residues 7-41, 74-88, and 96-110; these read STPA…GAPP, PSSK…AAAP, and PVSS…PSSG.

It belongs to the cyclin family. Cyclin AB subfamily.

This chain is Cyclin-A3-2 (CYCA3-2), found in Oryza sativa subsp. japonica (Rice).